The following is a 232-amino-acid chain: tRNA (guanine-N(1)-)-methyltransferase (232 aa).

S-adenosyl-L-methionine is bound by residues Gly111 and 131-136 (IGDYIL).

The protein belongs to the RNA methyltransferase TrmD family. In terms of assembly, homodimer.

It is found in the cytoplasm. It catalyses the reaction guanosine(37) in tRNA + S-adenosyl-L-methionine = N(1)-methylguanosine(37) in tRNA + S-adenosyl-L-homocysteine + H(+). Functionally, specifically methylates guanosine-37 in various tRNAs. This chain is tRNA (guanine-N(1)-)-methyltransferase, found in Bartonella tribocorum (strain CIP 105476 / IBS 506).